Consider the following 973-residue polypeptide: Coatomer subunit beta (973 aa).

HEAT repeat units follow at residues 98 to 133 and 134 to 170; these read HEMI…REAE and LLEQ…VSEH. Serine 181 is modified (phosphoserine). 2 HEAT repeats span residues 279-317 and 318-354; these read NVLV…NNVG and ALEE…SRNA. Position 540 is a phosphoserine (serine 540).

Oligomeric complex that consists of at least the alpha, beta, beta', gamma, delta, epsilon and zeta subunits. The complex interacts with ARF1 and PAB1. In terms of processing, the N-terminus is blocked.

The protein resides in the cytoplasm. Its subcellular location is the golgi apparatus membrane. The protein localises to the cytoplasmic vesicle. It is found in the COPI-coated vesicle membrane. Its function is as follows. The coatomer is a cytosolic protein complex that binds to dilysine motifs and reversibly associates with Golgi non-clathrin-coated vesicles, which further mediate biosynthetic protein transport from the ER, via the Golgi up to the trans Golgi network. Coatomer complex is required for budding from Golgi membranes, and is essential for the retrograde Golgi-to-ER transport of dilysine-tagged proteins. Required for mitochondrial morphology. The sequence is that of Coatomer subunit beta (SEC26) from Saccharomyces cerevisiae (strain ATCC 204508 / S288c) (Baker's yeast).